The primary structure comprises 325 residues: Biotin synthase (325 aa).

The Radical SAM core domain maps to 46–270 (NNSNNIDLCS…IAICKLILPN (225 aa)). [4Fe-4S] cluster-binding residues include Cys-64, Cys-68, and Cys-71. [2Fe-2S] cluster contacts are provided by Ser-107, Cys-139, Cys-198, and Arg-274.

This sequence belongs to the radical SAM superfamily. Biotin synthase family. In terms of assembly, homodimer. It depends on [4Fe-4S] cluster as a cofactor. [2Fe-2S] cluster is required as a cofactor.

The catalysed reaction is (4R,5S)-dethiobiotin + (sulfur carrier)-SH + 2 reduced [2Fe-2S]-[ferredoxin] + 2 S-adenosyl-L-methionine = (sulfur carrier)-H + biotin + 2 5'-deoxyadenosine + 2 L-methionine + 2 oxidized [2Fe-2S]-[ferredoxin]. Its pathway is cofactor biosynthesis; biotin biosynthesis; biotin from 7,8-diaminononanoate: step 2/2. Catalyzes the conversion of dethiobiotin (DTB) to biotin by the insertion of a sulfur atom into dethiobiotin via a radical-based mechanism. The protein is Biotin synthase of Methanococcus aeolicus (strain ATCC BAA-1280 / DSM 17508 / OCM 812 / Nankai-3).